The primary structure comprises 205 residues: Holliday junction branch migration complex subunit RuvA (205 aa).

The interval 1–67 is domain I; sequence MIGWLKGDVQ…ADNLQLFGFL (67 aa). Positions 68–146 are domain II; sequence QLAERDLFRE…DSVASTGPER (79 aa). The segment at 147-155 is flexible linker; it reads NQLDPVAPD. Residues 155–205 form a domain III region; sequence DLIATLETLGFETHEIRDALQRLNGMGGPQDGDDDDAWLRACIKLMSSTDP.

This sequence belongs to the RuvA family. In terms of assembly, homotetramer. Forms an RuvA(8)-RuvB(12)-Holliday junction (HJ) complex. HJ DNA is sandwiched between 2 RuvA tetramers; dsDNA enters through RuvA and exits via RuvB. An RuvB hexamer assembles on each DNA strand where it exits the tetramer. Each RuvB hexamer is contacted by two RuvA subunits (via domain III) on 2 adjacent RuvB subunits; this complex drives branch migration. In the full resolvosome a probable DNA-RuvA(4)-RuvB(12)-RuvC(2) complex forms which resolves the HJ.

It is found in the cytoplasm. Its function is as follows. The RuvA-RuvB-RuvC complex processes Holliday junction (HJ) DNA during genetic recombination and DNA repair, while the RuvA-RuvB complex plays an important role in the rescue of blocked DNA replication forks via replication fork reversal (RFR). RuvA specifically binds to HJ cruciform DNA, conferring on it an open structure. The RuvB hexamer acts as an ATP-dependent pump, pulling dsDNA into and through the RuvAB complex. HJ branch migration allows RuvC to scan DNA until it finds its consensus sequence, where it cleaves and resolves the cruciform DNA. This is Holliday junction branch migration complex subunit RuvA from Parasynechococcus marenigrum (strain WH8102).